A 271-amino-acid polypeptide reads, in one-letter code: Neurexophilin-1 (271 aa).

Residues 1-21 form the signal peptide; the sequence is MQAACWYVLLLLQPTVYLVTC. The II stretch occupies residues 22-97; sequence ANLTNGGKSE…WDWLRNSTDL (76 aa). 6 N-linked (GlcNAc...) asparagine glycosylation sites follow: Asn23, Asn68, Asn93, Asn146, Asn156, and Asn162. The tract at residues 98–176 is III; the sequence is QEPRPRAKRR…LVPPTKIVEF (79 aa). The tract at residues 177–185 is IV (linker domain); sequence DLAQQTVID. Residues 186-271 are v (Cys-rich); sequence AKDSKSFNCR…HSDTPYFPSG (86 aa).

It belongs to the neurexophilin family. In terms of processing, may be proteolytically processed at the boundary between the N-terminal non-conserved and the central conserved domain in neuron-like cells.

It is found in the secreted. May be signaling molecules that resemble neuropeptides. Ligand for alpha-neurexins. In Bos taurus (Bovine), this protein is Neurexophilin-1 (NXPH1).